The following is a 747-amino-acid chain: NAD-dependent protein deacetylase sirtuin-1 (747 aa).

The disordered stretch occupies residues 1 to 135; sequence MADEAALALQ…DDEGEEEEEA (135 aa). A2 bears the N-acetylalanine mark. The segment at 2–139 is interaction with CLOCK; the sequence is ADEAALALQP…EEEEEAAAAA (138 aa). The tract at residues 2-268 is interaction with H1-4; it reads ADEAALALQP…LTGAGVSVSC (267 aa). A phosphoserine mark is found at S14 and S26. At S27 the chain carries Phosphoserine; by MAPK8. A Nuclear localization signal motif is present at residues 32–39; sequence PLRKRPRR. S47 is subject to Phosphoserine; by MAPK8. Positions 61–100 are enriched in low complexity; that stretch reads PAAARGCPGAAAAALWREAEAEAAAAGGEQEAQATAAAGE. A compositionally biased stretch (acidic residues) spans 120-135; the sequence is LYDEDDDDEGEEEEEA. Residues 138–145 carry the Nuclear export signal motif; it reads AAIGYRDN. The tract at residues 143-541 is interaction with CCAR2; the sequence is RDNLLFGDEI…LHVSEDSSSP (399 aa). Phosphoserine occurs at positions 159, 162, 172, and 173. The Nuclear localization signal motif lies at 223–230; it reads IVINILSE. A Deacetylase sirtuin-type domain is found at 236–496; it reads KRKDINTIED…NELCHRLGGE (261 aa). Residue K238 is modified to N6-acetyllysine. The tract at residues 256–259 is required for interaction with the sumoylated form of CCAR2; that stretch reads IIVL. NAD(+) is bound by residues 261 to 280 and 345 to 348; these read GAGV…DGIY and QNID. H363 (proton acceptor) is an active-site residue. The Zn(2+) site is built by C371 and C374. N6-acetyllysine is present on K377. Positions 395 and 398 each coordinate Zn(2+). S-nitrosocysteine is present on residues C395 and C398. The Nuclear export signal signature appears at 425–431; sequence AMKYDKD. An N6-acetyllysine modification is found at K430. Residues 440–442, 465–467, and C482 contribute to the NAD(+) site; these read GSS and NRE. Position 513 is an N6-acetyllysine (K513). Disordered regions lie at residues 523–549 and 562–587; these read YLSE…PPDS and SNDD…TSRN. T530 bears the Phosphothreonine; by DYRK1A, DYRK3 and MAPK8 mark. S535 bears the Phosphoserine mark. A compositionally biased stretch (polar residues) spans 537–549; it reads DSSSPERTSPPDS. The interval 538–540 is phosphorylated at one of three serine residues; that stretch reads SSS. Phosphothreonine is present on T544. A Phosphoserine modification is found at S545. A compositionally biased stretch (basic and acidic residues) spans 569 to 580; the sequence is SESKGCMEEKPQ. K610 carries the post-translational modification N6-acetyllysine. 2 positions are modified to phosphoserine; by CaMK2: S659 and S661. Residues 663 to 726 form a disordered region; it reads DDVLSSSSCG…FGTDGDDQEA (64 aa). Low complexity predominate over residues 666-677; sequence LSSSSCGSNSDS. Positions 687 to 707 are enriched in acidic residues; it reads EPMEDESEIEEFYNGLEDEPD. T719 is modified (phosphothreonine). S747 carries the post-translational modification Phosphoserine.

It belongs to the sirtuin family. Class I subfamily. Interacts with XBP1 isoform 2. Found in a complex with PCAF and MYOD1. Interacts with FOXO1; the interaction deacetylates FOXO1, resulting in its nuclear retention and promotion of its transcriptional activity Component of the eNoSC complex, composed of SIRT1, SUV39H1 and RRP8. Interacts with HES1, HEY2 and PML. Interacts with RPS19BP1/AROS. Interacts with CCAR2 (via N-terminus); the interaction disrupts the interaction between SIRT1 and p53/TP53. Interacts with SETD7; the interaction induces the dissociation of SIRT1 from p53/TP53 and increases p53/TP53 activity. Interacts with MYCN, NR1I2, CREBZF, TSC2, TLE1, FOS, JUN, NR0B2, PPARG, NCOR, IRS1, IRS2 and NMNAT1. Interacts with HNF1A; the interaction occurs under nutrient restriction. Interacts with SUZ12; the interaction mediates the association with the PRC4 histone methylation complex which is specific as an association with PCR2 and PCR3 complex variants is not found. Interacts with BCL6; leads to a epigenetic repression of specific target genes. Interacts with CLOCK, BMAL1 and PER2. Interacts with PPARA; the interaction seems to be modulated by NAD(+) levels. Interacts with NR1H3 and this interaction is inhibited in the presence of CCAR2. Interacts with CHEK2. Interacts with p53/TP53. Exhibits a preferential interaction with sumoylated CCAR2 over its unmodified form. Interacts with PACS2. Interacts with SIRT7. Interacts with PUS7. Interacts with TULP3. Interacts with MORN3; the interaction enhances the ubiquitination of p53/TP53. As to quaternary structure, (Microbial infection) Interacts with HIV-1 Tat. Zn(2+) serves as cofactor. Methylated on multiple lysine residues; methylation is enhanced after DNA damage and is dispensable for deacetylase activity toward p53/TP53. In terms of processing, phosphorylated. Phosphorylated by STK4/MST1, resulting in inhibition of SIRT1-mediated p53/TP53 deacetylation. Phosphorylation by MAPK8/JNK1 at Ser-27, Ser-47, and Thr-530 leads to increased nuclear localization and enzymatic activity. Phosphorylation at Thr-530 by DYRK1A and DYRK3 activates deacetylase activity and promotes cell survival. Phosphorylation by mammalian target of rapamycin complex 1 (mTORC1) at Ser-47 inhibits deacetylation activity. Phosphorylated by CaMK2, leading to increased p53/TP53 and NF-kappa-B p65/RELA deacetylation activity. Phosphorylation at Ser-27 implicating MAPK9 is linked to protein stability. There is some ambiguity for some phosphosites: Ser-159/Ser-162 and Thr-544/Ser-545. Post-translationally, proteolytically cleaved by cathepsin B upon TNF-alpha treatment to yield catalytic inactive but stable SirtT1 75 kDa fragment (75SirT1). S-nitrosylated by GAPDH, leading to inhibit the NAD-dependent protein deacetylase activity. In terms of processing, acetylated at various Lys residues. Deacetylated via an autocatalytic mechanism. Autodeacetylation at Lys-238 promotes its protein deacetylase activity. Post-translationally, ubiquitinated; leading to degradation. Deubiquitinated by USP22; leading to stabilization. In terms of tissue distribution, widely expressed.

The protein resides in the nucleus. The protein localises to the PML body. It is found in the cytoplasm. Its subcellular location is the mitochondrion. The catalysed reaction is N(6)-acetyl-L-lysyl-[protein] + NAD(+) + H2O = 2''-O-acetyl-ADP-D-ribose + nicotinamide + L-lysyl-[protein]. It catalyses the reaction N(6)-propanoyl-L-lysyl-[protein] + NAD(+) + H2O = 3''-O-propanoyl-ADP-D-ribose + nicotinamide + L-lysyl-[protein]. The enzyme catalyses N(6)-(2E)-butenoyl-L-lysyl-[protein] + NAD(+) + H2O = 2''-O-(2E)-but-2-enoyl-ADP-D-ribose + nicotinamide + L-lysyl-[protein]. It carries out the reaction N(6)-[(S)-lactoyl]-L-lysyl-[protein] + NAD(+) + H2O = 2''-O-(S)-lactoyl-ADP-D-ribose + nicotinamide + L-lysyl-[protein]. Its activity is regulated as follows. Inhibited by nicotinamide. Activated by resveratrol (3,5,4'-trihydroxy-trans-stilbene), butein (3,4,2',4'-tetrahydroxychalcone), piceatannol (3,5,3',4'-tetrahydroxy-trans-stilbene), Isoliquiritigenin (4,2',4'-trihydroxychalcone), fisetin (3,7,3',4'-tetrahydroxyflavone) and quercetin (3,5,7,3',4'-pentahydroxyflavone). MAPK8/JNK1 and RPS19BP1/AROS act as positive regulators of deacetylation activity. Negatively regulated by CCAR2. In terms of biological role, NAD-dependent protein deacetylase that links transcriptional regulation directly to intracellular energetics and participates in the coordination of several separated cellular functions such as cell cycle, response to DNA damage, metabolism, apoptosis and autophagy. Can modulate chromatin function through deacetylation of histones and can promote alterations in the methylation of histones and DNA, leading to transcriptional repression. Deacetylates a broad range of transcription factors and coregulators, thereby regulating target gene expression positively and negatively. Serves as a sensor of the cytosolic ratio of NAD(+)/NADH which is altered by glucose deprivation and metabolic changes associated with caloric restriction. Is essential in skeletal muscle cell differentiation and in response to low nutrients mediates the inhibitory effect on skeletal myoblast differentiation which also involves 5'-AMP-activated protein kinase (AMPK) and nicotinamide phosphoribosyltransferase (NAMPT). Component of the eNoSC (energy-dependent nucleolar silencing) complex, a complex that mediates silencing of rDNA in response to intracellular energy status and acts by recruiting histone-modifying enzymes. The eNoSC complex is able to sense the energy status of cell: upon glucose starvation, elevation of NAD(+)/NADP(+) ratio activates SIRT1, leading to histone H3 deacetylation followed by dimethylation of H3 at 'Lys-9' (H3K9me2) by SUV39H1 and the formation of silent chromatin in the rDNA locus. Deacetylates 'Lys-266' of SUV39H1, leading to its activation. Inhibits skeletal muscle differentiation by deacetylating PCAF and MYOD1. Deacetylates H2A and 'Lys-26' of H1-4. Deacetylates 'Lys-16' of histone H4 (in vitro). Involved in NR0B2/SHP corepression function through chromatin remodeling: Recruited to LRH1 target gene promoters by NR0B2/SHP thereby stimulating histone H3 and H4 deacetylation leading to transcriptional repression. Proposed to contribute to genomic integrity via positive regulation of telomere length; however, reports on localization to pericentromeric heterochromatin are conflicting. Proposed to play a role in constitutive heterochromatin (CH) formation and/or maintenance through regulation of the available pool of nuclear SUV39H1. Upon oxidative/metabolic stress decreases SUV39H1 degradation by inhibiting SUV39H1 polyubiquitination by MDM2. This increase in SUV39H1 levels enhances SUV39H1 turnover in CH, which in turn seems to accelerate renewal of the heterochromatin which correlates with greater genomic integrity during stress response. Deacetylates 'Lys-382' of p53/TP53 and impairs its ability to induce transcription-dependent proapoptotic program and modulate cell senescence. Deacetylates TAF1B and thereby represses rDNA transcription by the RNA polymerase I. Deacetylates MYC, promotes the association of MYC with MAX and decreases MYC stability leading to compromised transformational capability. Deacetylates FOXO3 in response to oxidative stress thereby increasing its ability to induce cell cycle arrest and resistance to oxidative stress but inhibiting FOXO3-mediated induction of apoptosis transcriptional activity; also leading to FOXO3 ubiquitination and protesomal degradation. Appears to have a similar effect on MLLT7/FOXO4 in regulation of transcriptional activity and apoptosis. Deacetylates DNMT1; thereby impairs DNMT1 methyltransferase-independent transcription repressor activity, modulates DNMT1 cell cycle regulatory function and DNMT1-mediated gene silencing. Deacetylates RELA/NF-kappa-B p65 thereby inhibiting its transactivating potential and augments apoptosis in response to TNF-alpha. Deacetylates HIF1A, KAT5/TIP60, RB1 and HIC1. Deacetylates FOXO1 resulting in its nuclear retention and enhancement of its transcriptional activity leading to increased gluconeogenesis in liver. Inhibits E2F1 transcriptional activity and apoptotic function, possibly by deacetylation. Involved in HES1- and HEY2-mediated transcriptional repression. In cooperation with MYCN seems to be involved in transcriptional repression of DUSP6/MAPK3 leading to MYCN stabilization by phosphorylation at 'Ser-62'. Deacetylates MEF2D. Required for antagonist-mediated transcription suppression of AR-dependent genes which may be linked to local deacetylation of histone H3. Represses HNF1A-mediated transcription. Required for the repression of ESRRG by CREBZF. Deacetylates NR1H3 and NR1H2 and deacetylation of NR1H3 at 'Lys-434' positively regulates transcription of NR1H3:RXR target genes, promotes NR1H3 proteasomal degradation and results in cholesterol efflux; a promoter clearing mechanism after reach round of transcription is proposed. Involved in lipid metabolism: deacetylates LPIN1, thereby inhibiting diacylglycerol synthesis. Implicated in regulation of adipogenesis and fat mobilization in white adipocytes by repression of PPARG which probably involves association with NCOR1 and SMRT/NCOR2. Deacetylates p300/EP300 and PRMT1. Deacetylates ACSS2 leading to its activation, and HMGCS1 deacetylation. Involved in liver and muscle metabolism. Through deacetylation and activation of PPARGC1A is required to activate fatty acid oxidation in skeletal muscle under low-glucose conditions and is involved in glucose homeostasis. Involved in regulation of PPARA and fatty acid beta-oxidation in liver. Involved in positive regulation of insulin secretion in pancreatic beta cells in response to glucose; the function seems to imply transcriptional repression of UCP2. Proposed to deacetylate IRS2 thereby facilitating its insulin-induced tyrosine phosphorylation. Deacetylates SREBF1 isoform SREBP-1C thereby decreasing its stability and transactivation in lipogenic gene expression. Involved in DNA damage response by repressing genes which are involved in DNA repair, such as XPC and TP73, deacetylating XRCC6/Ku70, and facilitating recruitment of additional factors to sites of damaged DNA, such as SIRT1-deacetylated NBN can recruit ATM to initiate DNA repair and SIRT1-deacetylated XPA interacts with RPA2. Also involved in DNA repair of DNA double-strand breaks by homologous recombination and specifically single-strand annealing independently of XRCC6/Ku70 and NBN. Promotes DNA double-strand breaks by mediating deacetylation of SIRT6. Transcriptional suppression of XPC probably involves an E2F4:RBL2 suppressor complex and protein kinase B (AKT) signaling. Transcriptional suppression of TP73 probably involves E2F4 and PCAF. Deacetylates WRN thereby regulating its helicase and exonuclease activities and regulates WRN nuclear translocation in response to DNA damage. Deacetylates APEX1 at 'Lys-6' and 'Lys-7' and stimulates cellular AP endonuclease activity by promoting the association of APEX1 to XRCC1. Catalyzes deacetylation of ERCC4/XPF, thereby impairing interaction with ERCC1 and nucleotide excision repair (NER). Increases p53/TP53-mediated transcription-independent apoptosis by blocking nuclear translocation of cytoplasmic p53/TP53 and probably redirecting it to mitochondria. Deacetylates XRCC6/Ku70 at 'Lys-539' and 'Lys-542' causing it to sequester BAX away from mitochondria thereby inhibiting stress-induced apoptosis. Is involved in autophagy, presumably by deacetylating ATG5, ATG7 and MAP1LC3B/ATG8. Deacetylates AKT1 which leads to enhanced binding of AKT1 and PDK1 to PIP3 and promotes their activation. Proposed to play role in regulation of STK11/LBK1-dependent AMPK signaling pathways implicated in cellular senescence which seems to involve the regulation of the acetylation status of STK11/LBK1. Can deacetylate STK11/LBK1 and thereby increase its activity, cytoplasmic localization and association with STRAD; however, the relevance of such activity in normal cells is unclear. In endothelial cells is shown to inhibit STK11/LBK1 activity and to promote its degradation. Deacetylates SMAD7 at 'Lys-64' and 'Lys-70' thereby promoting its degradation. Deacetylates CIITA and augments its MHC class II transactivation and contributes to its stability. Deacetylates MECOM/EVI1. Deacetylates PML at 'Lys-487' and this deacetylation promotes PML control of PER2 nuclear localization. During the neurogenic transition, represses selective NOTCH1-target genes through histone deacetylation in a BCL6-dependent manner and leading to neuronal differentiation. Regulates the circadian expression of several core clock genes, including BMAL1, RORC, PER2 and CRY1 and plays a critical role in maintaining a controlled rhythmicity in histone acetylation, thereby contributing to circadian chromatin remodeling. Deacetylates BMAL1 and histones at the circadian gene promoters in order to facilitate repression by inhibitory components of the circadian oscillator. Deacetylates PER2, facilitating its ubiquitination and degradation by the proteasome. Protects cardiomyocytes against palmitate-induced apoptosis. Deacetylates XBP1 isoform 2; deacetylation decreases protein stability of XBP1 isoform 2 and inhibits its transcriptional activity. Deacetylates PCK1 and directs its activity toward phosphoenolpyruvate production promoting gluconeogenesis. Involved in the CCAR2-mediated regulation of PCK1 and NR1D1. Deacetylates CTNB1 at 'Lys-49'. In POMC (pro-opiomelanocortin) neurons, required for leptin-induced activation of PI3K signaling. Deacetylates SOX9; promoting SOX9 nuclear localization and transactivation activity. Involved in the regulation of centrosome duplication: deacetylates CENATAC in G1 phase, allowing for SASS6 accumulation on the centrosome and subsequent procentriole assembly. Deacetylates NDC80/HEC1. In addition to protein deacetylase activity, also acts as a protein-lysine deacylase by mediating protein delactylation, depropionylation and decrotonylation. Mediates depropionylation of Osterix (SP7). Catalyzes decrotonylation of histones; it however does not represent a major histone decrotonylase. Mediates protein delactylation of TEAD1 and YAP1. Functionally, deacetylates 'Lys-382' of p53/TP53, however with lower activity than isoform 1. In combination, the two isoforms exert an additive effect. Isoform 2 regulates p53/TP53 expression and cellular stress response and is in turn repressed by p53/TP53 presenting a SIRT1 isoform-dependent auto-regulatory loop. Its function is as follows. Catalytically inactive 75SirT1 may be involved in regulation of apoptosis. May be involved in protecting chondrocytes from apoptotic death by associating with cytochrome C and interfering with apoptosome assembly. (Microbial infection) In case of HIV-1 infection, interacts with and deacetylates the viral Tat protein. The viral Tat protein inhibits SIRT1 deacetylation activity toward RELA/NF-kappa-B p65, thereby potentiates its transcriptional activity and SIRT1 is proposed to contribute to T-cell hyperactivation during infection. The protein is NAD-dependent protein deacetylase sirtuin-1 of Homo sapiens (Human).